The following is a 33-amino-acid chain: Kappa-theraphotoxin-Pg2a (33 aa).

Disulfide bonds link Cys-2–Cys-16, Cys-9–Cys-21, and Cys-15–Cys-28.

Expressed by the venom gland.

It is found in the secreted. Functionally, gating modifier of Kv2.1/KCNB1 channels. The chain is Kappa-theraphotoxin-Pg2a from Chilobrachys guangxiensis (Chinese earth tiger tarantula).